We begin with the raw amino-acid sequence, 330 residues long: Acrylyl-CoA reductase AcuI (330 aa).

Residues tyrosine 44, 159–162 (AGGV), 181–183 (TGR), arginine 201, leucine 247, and serine 272 contribute to the NADP(+) site.

The protein belongs to the zinc-containing alcohol dehydrogenase family. Acrylyl-CoA reductase subfamily. In terms of assembly, homodimer.

The protein localises to the cytoplasm. It catalyses the reaction propanoyl-CoA + NADP(+) = acryloyl-CoA + NADPH + H(+). Functionally, probably catalyzes the NADPH-dependent reduction of acrylyl-CoA to propanoyl-CoA. Restores acrylate resistance when expressed in an E.coli strain K12 acuI deletion. The sequence is that of Acrylyl-CoA reductase AcuI (acuI) from Ruegeria pomeroyi (strain ATCC 700808 / DSM 15171 / DSS-3) (Silicibacter pomeroyi).